A 380-amino-acid polypeptide reads, in one-letter code: D-alanine--D-alanine ligase (380 aa).

Residues 142–348 (KQVLTAHGIR…YADLIDRLIE (207 aa)) enclose the ATP-grasp domain. ATP is bound at residue 172–227 (QSRLGDNVFIKPANQGSSVGIHKASNVQEYLDGVADAFRYDYKVLVEQTIDGPQEV). Asp302, Glu315, and Asn317 together coordinate Mg(2+).

The protein belongs to the D-alanine--D-alanine ligase family. It depends on Mg(2+) as a cofactor. Mn(2+) is required as a cofactor.

The protein localises to the cytoplasm. The enzyme catalyses 2 D-alanine + ATP = D-alanyl-D-alanine + ADP + phosphate + H(+). It participates in cell wall biogenesis; peptidoglycan biosynthesis. Functionally, cell wall formation. The polypeptide is D-alanine--D-alanine ligase (Levilactobacillus brevis (strain ATCC 367 / BCRC 12310 / CIP 105137 / JCM 1170 / LMG 11437 / NCIMB 947 / NCTC 947) (Lactobacillus brevis)).